We begin with the raw amino-acid sequence, 174 residues long: Small ribosomal subunit protein uS5c (174 aa).

Positions 17-80 (WEERVVQVKR…TDAKKHLVTV (64 aa)) constitute an S5 DRBM domain.

This sequence belongs to the universal ribosomal protein uS5 family. In terms of assembly, part of the 30S ribosomal subunit. Contacts protein S4.

The protein localises to the plastid. The protein resides in the chloroplast. With S4 and S12 plays an important role in translational accuracy. This chain is Small ribosomal subunit protein uS5c (rps5), found in Pyropia yezoensis (Susabi-nori).